Here is a 310-residue protein sequence, read N- to C-terminus: Malate dehydrogenase (310 aa).

NAD(+) is bound by residues 7-12 (GAGNVG) and Asp32. Substrate contacts are provided by Arg81 and Arg87. Residues Asn94 and 117 to 119 (VSN) contribute to the NAD(+) site. The substrate site is built by Asn119 and Arg150. His174 (proton acceptor) is an active-site residue.

This sequence belongs to the LDH/MDH superfamily. MDH type 3 family. In terms of assembly, homotetramer; arranged as a dimer of dimers.

It catalyses the reaction (S)-malate + NAD(+) = oxaloacetate + NADH + H(+). Its function is as follows. Catalyzes the reversible oxidation of malate to oxaloacetate. The sequence is that of Malate dehydrogenase from Chlorobaculum parvum (strain DSM 263 / NCIMB 8327) (Chlorobium vibrioforme subsp. thiosulfatophilum).